The sequence spans 169 residues: Macrocypin-1a (169 aa).

This sequence belongs to the protease inhibitor I85 family.

Functionally, inhibits papain and cysteine cathepsin endopeptidases, and also inhibits cathepsins B and H, which exhibit both exopeptidase and endopeptidase activities. This chain is Macrocypin-1a, found in Macrolepiota procera (Parasol mushroom).